A 185-amino-acid chain; its full sequence is Ribose 1,5-bisphosphate phosphokinase PhnN (185 aa).

An ATP-binding site is contributed by 10-17; it reads GPSGSGKD.

Belongs to the ribose 1,5-bisphosphokinase family.

The enzyme catalyses alpha-D-ribose 1,5-bisphosphate + ATP = 5-phospho-alpha-D-ribose 1-diphosphate + ADP. The protein operates within metabolic intermediate biosynthesis; 5-phospho-alpha-D-ribose 1-diphosphate biosynthesis; 5-phospho-alpha-D-ribose 1-diphosphate from D-ribose 5-phosphate (route II): step 3/3. Its function is as follows. Catalyzes the phosphorylation of ribose 1,5-bisphosphate to 5-phospho-D-ribosyl alpha-1-diphosphate (PRPP). This chain is Ribose 1,5-bisphosphate phosphokinase PhnN, found in Pseudomonas paraeruginosa (strain DSM 24068 / PA7) (Pseudomonas aeruginosa (strain PA7)).